Here is a 103-residue protein sequence, read N- to C-terminus: MIPVKEHAHTLCFPLLVAPRSSKNMVVGAHDNALKIKITAPPVDGRANEMCVAFLSRLLGIPKTSITIAAGAASKRKEVCLALSPNAAGKQEAARIKALLAGY.

This sequence belongs to the UPF0235 family.

In Desulfosudis oleivorans (strain DSM 6200 / JCM 39069 / Hxd3) (Desulfococcus oleovorans), this protein is UPF0235 protein Dole_0289.